The primary structure comprises 789 residues: DEAD-box ATP-dependent RNA helicase 28 (789 aa).

Residues 1 to 152 (MPSSFFFEDA…AEYKPEDATP (152 aa)) are disordered. Residues 13-66 (DELELIRNQEDSSEEDVKEGEAEEHEAGEDEDGEEEYEEEDDDEEEEDEKRKRD) adopt a coiled-coil conformation. The span at 23–60 (DSSEEDVKEGEAEEHEAGEDEDGEEEYEEEDDDEEEED) shows a compositional bias: acidic residues. Basic and acidic residues predominate over residues 83–99 (GEEHARRHTTSIDEKIS). Residues 110 to 135 (SINEEEEEEEEEEDASDAETDKQEEY) adopt a coiled-coil conformation. The segment covering 112-127 (NEEEEEEEEEEDASDA) has biased composition (acidic residues). The short motif at 167–195 (DTFMELNLSRPLLRACETLGYKKPTPIQA) is the Q motif element. Residues 198 to 372 (IPLALTGRDL…KLSLNKPLRL (175 aa)) enclose the Helicase ATP-binding domain. Residue 211–218 (AITGSGKT) participates in ATP binding. Residues 320–323 (DEAD) carry the DEAD box motif. A Helicase C-terminal domain is found at 402–546 (VLLSLCTRTF…SRVIPEQSIV (145 aa)). Coiled coils occupy residues 563-591 (ISAE…HRDE) and 628-677 (SADR…EDEE). A disordered region spans residues 611-789 (AQAEKDSAGN…FKSKARYKRR (179 aa)). A compositionally biased stretch (basic and acidic residues) spans 628–637 (SADRAEDLKM). Basic residues predominate over residues 638–656 (KEKRKREREKNLPRKKRRK). Acidic residues predominate over residues 665-678 (EDNEGEEEEEDEEG). 3 stretches are compositionally biased toward basic and acidic residues: residues 691 to 701 (KKQETDKKGLT), 718 to 734 (RAID…DKKQ), and 743 to 761 (PRGE…EKKQ). The span at 772-789 (PRTKSKNSFKSKARYKRR) shows a compositional bias: basic residues.

It belongs to the DEAD box helicase family. DDX27/DRS1 subfamily.

It carries out the reaction ATP + H2O = ADP + phosphate + H(+). In Arabidopsis thaliana (Mouse-ear cress), this protein is DEAD-box ATP-dependent RNA helicase 28 (RH28).